Here is a 445-residue protein sequence, read N- to C-terminus: 3-phosphoshikimate 1-carboxyvinyltransferase (445 aa).

The span at 1 to 20 (MSSTHPGRTIRSGATQNLSG) shows a compositional bias: polar residues. The tract at residues 1-24 (MSSTHPGRTIRSGATQNLSGTIRP) is disordered. Residues Lys-28, Ser-29, and Arg-33 each coordinate 3-phosphoshikimate. Lys-28 is a phosphoenolpyruvate binding site. Phosphoenolpyruvate is bound by residues Gly-101 and Arg-129. Ser-174, Gln-176, Asp-322, and Lys-349 together coordinate 3-phosphoshikimate. A phosphoenolpyruvate-binding site is contributed by Gln-176. The active-site Proton acceptor is Asp-322. Phosphoenolpyruvate-binding residues include Arg-353 and Arg-397.

The protein belongs to the EPSP synthase family. As to quaternary structure, monomer.

The protein localises to the cytoplasm. It catalyses the reaction 3-phosphoshikimate + phosphoenolpyruvate = 5-O-(1-carboxyvinyl)-3-phosphoshikimate + phosphate. The protein operates within metabolic intermediate biosynthesis; chorismate biosynthesis; chorismate from D-erythrose 4-phosphate and phosphoenolpyruvate: step 6/7. In terms of biological role, catalyzes the transfer of the enolpyruvyl moiety of phosphoenolpyruvate (PEP) to the 5-hydroxyl of shikimate-3-phosphate (S3P) to produce enolpyruvyl shikimate-3-phosphate and inorganic phosphate. The chain is 3-phosphoshikimate 1-carboxyvinyltransferase from Magnetococcus marinus (strain ATCC BAA-1437 / JCM 17883 / MC-1).